A 330-amino-acid chain; its full sequence is Ketol-acid reductoisomerase (NADP(+)) (330 aa).

The KARI N-terminal Rossmann domain occupies 1-181 (MKMYYESDVN…GFTKAGVIET (181 aa)). Residues 24–27 (YGSQ), Arg47, Ser52, and 82–85 (DEIQ) each bind NADP(+). His107 is a catalytic residue. Gly133 contributes to the NADP(+) binding site. In terms of domain architecture, KARI C-terminal knotted spans 182-327 (TFKEETETDL…ERLRKACGLQ (146 aa)). Asp190, Glu194, Glu226, and Glu230 together coordinate Mg(2+). Ser251 contacts substrate.

This sequence belongs to the ketol-acid reductoisomerase family. Mg(2+) is required as a cofactor.

The enzyme catalyses (2R)-2,3-dihydroxy-3-methylbutanoate + NADP(+) = (2S)-2-acetolactate + NADPH + H(+). The catalysed reaction is (2R,3R)-2,3-dihydroxy-3-methylpentanoate + NADP(+) = (S)-2-ethyl-2-hydroxy-3-oxobutanoate + NADPH + H(+). Its pathway is amino-acid biosynthesis; L-isoleucine biosynthesis; L-isoleucine from 2-oxobutanoate: step 2/4. The protein operates within amino-acid biosynthesis; L-valine biosynthesis; L-valine from pyruvate: step 2/4. In terms of biological role, involved in the biosynthesis of branched-chain amino acids (BCAA). Catalyzes an alkyl-migration followed by a ketol-acid reduction of (S)-2-acetolactate (S2AL) to yield (R)-2,3-dihydroxy-isovalerate. In the isomerase reaction, S2AL is rearranged via a Mg-dependent methyl migration to produce 3-hydroxy-3-methyl-2-ketobutyrate (HMKB). In the reductase reaction, this 2-ketoacid undergoes a metal-dependent reduction by NADPH to yield (R)-2,3-dihydroxy-isovalerate. The sequence is that of Ketol-acid reductoisomerase (NADP(+)) from Methanobrevibacter smithii (strain ATCC 35061 / DSM 861 / OCM 144 / PS).